We begin with the raw amino-acid sequence, 678 residues long: Platelet endothelial cell adhesion molecule (678 aa).

The N-terminal stretch at 1–17 (MLLALLLTMLLYASLQA) is a signal peptide. The Extracellular segment spans residues 18–589 (QENSFTINSI…VRVFLAPWKK (572 aa)). Ig-like C2-type domains are found at residues 40–126 (GQKL…PEVT), 135–213 (GGIV…FIRS), 225–309 (PKFQ…ILVN), 315–391 (PRPK…LVPV), 413–472 (GQII…NCHS), and 488–577 (PVDE…RSGP). C47 and C99 are disulfide-bonded. 2 N-linked (GlcNAc...) asparagine glycosylation sites follow: N74 and N141. 2 cysteine pairs are disulfide-bonded: C142–C195 and C245–C293. N-linked (GlcNAc...) asparagine glycosylation is found at N309, N345, N360, N424, and N540. Disulfide bonds link C336-C375, C420-C465, and C512-C561. Residues 590–610 (GLIAVVVIGVVIAALIVAAKY) traverse the membrane as a helical segment. The Cytoplasmic portion of the chain corresponds to 611 to 678 (YFLRKAKAKQ…EPHQENGRLP (68 aa)). Residues 634 to 653 (NSNSEKVSEPSVETNSHYDS) form a disordered region. Residues 658-663 (VEYTEV) carry the ITIM motif motif. Residue Y660 is modified to Phosphotyrosine; by FER.

As to quaternary structure, trans-homodimer (via Ig-like C2-type 1 and Ig-like C2-type 2 domains); trans-homodimerization is required for cell-cell interaction. Forms a complex with BDKRB2 and GNAQ. Interacts with BDKRB2 and GNAQ. Interacts with PTPN11. Interacts with FER. Interacts with CD177; the interaction is Ca(2+)-dependent; the interaction is direct. Phosphorylated on Ser and Tyr residues after cellular activation. In endothelial cells Fyn mediates mechanical-force (stretch or pull) induced tyrosine phosphorylation. Phosphorylated on tyrosine residues by FER and FES in response to FCER1 activation. In terms of processing, palmitoylation by ZDHHC21 is necessary for cell surface expression in endothelial cells and enrichment in membrane rafts.

Its subcellular location is the cell membrane. It localises to the membrane raft. The protein resides in the cell junction. In terms of biological role, cell adhesion molecule which is required for leukocyte transendothelial migration (TEM) under most inflammatory conditions. Tyr-660 plays a critical role in TEM and is required for efficient trafficking of PECAM1 to and from the lateral border recycling compartment (LBRC) and is also essential for the LBRC membrane to be targeted around migrating leukocytes. Trans-homophilic interaction may play a role in endothelial cell-cell adhesion via cell junctions. Heterophilic interaction with CD177 plays a role in transendothelial migration of neutrophils. Homophilic ligation of PECAM1 prevents macrophage-mediated phagocytosis of neighboring viable leukocytes by transmitting a detachment signal. Promotes macrophage-mediated phagocytosis of apoptotic leukocytes by tethering them to the phagocytic cells; PECAM1-mediated detachment signal appears to be disabled in apoptotic leukocytes. Modulates bradykinin receptor BDKRB2 activation. Regulates bradykinin- and hyperosmotic shock-induced ERK1/2 activation in endothelial cells. Induces susceptibility to atherosclerosis. This is Platelet endothelial cell adhesion molecule (Pecam1) from Rattus norvegicus (Rat).